A 555-amino-acid chain; its full sequence is Glutamate--tRNA ligase (555 aa).

The short motif at 100–110 is the 'HIGH' region element; it reads PNPSGPLHIGH.

Belongs to the class-I aminoacyl-tRNA synthetase family. Glutamate--tRNA ligase type 2 subfamily.

The protein localises to the cytoplasm. The catalysed reaction is tRNA(Glu) + L-glutamate + ATP = L-glutamyl-tRNA(Glu) + AMP + diphosphate. Catalyzes the attachment of glutamate to tRNA(Glu) in a two-step reaction: glutamate is first activated by ATP to form Glu-AMP and then transferred to the acceptor end of tRNA(Glu). This is Glutamate--tRNA ligase from Methanococcus maripaludis (strain C5 / ATCC BAA-1333).